Here is a 654-residue protein sequence, read N- to C-terminus: Pentatricopeptide repeat-containing protein At4g19191, mitochondrial (654 aa).

The N-terminal 65 residues, 1 to 65, are a transit peptide targeting the mitochondrion; the sequence is MSLIHRRLYR…PFVAKACARL (65 aa). PPR repeat units lie at residues 86–116, 117–151, 152–186, 187–217, 220–254, 255–289, 290–320, 321–355, 356–390, 392–422, 423–457, 458–488, and 494–524; these read DVFV…MPER, DATT…EITP, DSVT…GVDV, QVTV…IDRG, TVVS…EFKP, DLST…GTDQ, DIEA…MTSR, TCVS…GEKP, DLVT…GCKR, NVMI…TPEK, TVVT…DYKP, NHIT…MKQV, and GLDH…MSAK. The type E motif stretch occupies residues 529–604; sequence IWGALLNACK…YPGESVIQVN (76 aa). A type E(+) motif region spans residues 605–635; sequence GKNHSFTVGEHGHVENEVIYFTLNGLSLFAK.

This sequence belongs to the PPR family. PCMP-E subfamily.

The protein localises to the mitochondrion. In Arabidopsis thaliana (Mouse-ear cress), this protein is Pentatricopeptide repeat-containing protein At4g19191, mitochondrial (PCMP-E1).